The following is a 411-amino-acid chain: uncharacterized protein (411 aa).

The protein in the C-terminal section; belongs to the PAPS reductase family.

This is an uncharacterized protein from Methanocaldococcus jannaschii (strain ATCC 43067 / DSM 2661 / JAL-1 / JCM 10045 / NBRC 100440) (Methanococcus jannaschii).